The chain runs to 296 residues: Formamidopyrimidine-DNA glycosylase (296 aa).

P2 serves as the catalytic Schiff-base intermediate with DNA. E3 functions as the Proton donor in the catalytic mechanism. Residue K58 is the Proton donor; for beta-elimination activity of the active site. Positions 106, 125, and 167 each coordinate DNA. The FPG-type zinc-finger motif lies at 258–294; the sequence is RVYDRVGLPCSRPGCAGAITRIVQANRSTFFCATCQP. The active-site Proton donor; for delta-elimination activity is R284.

Belongs to the FPG family. As to quaternary structure, monomer. It depends on Zn(2+) as a cofactor.

It carries out the reaction Hydrolysis of DNA containing ring-opened 7-methylguanine residues, releasing 2,6-diamino-4-hydroxy-5-(N-methyl)formamidopyrimidine.. The catalysed reaction is 2'-deoxyribonucleotide-(2'-deoxyribose 5'-phosphate)-2'-deoxyribonucleotide-DNA = a 3'-end 2'-deoxyribonucleotide-(2,3-dehydro-2,3-deoxyribose 5'-phosphate)-DNA + a 5'-end 5'-phospho-2'-deoxyribonucleoside-DNA + H(+). Involved in base excision repair of DNA damaged by oxidation or by mutagenic agents. Acts as a DNA glycosylase that recognizes and removes damaged bases. Has a preference for oxidized purines, such as 7,8-dihydro-8-oxoguanine (8-oxoG). Has AP (apurinic/apyrimidinic) lyase activity and introduces nicks in the DNA strand. Cleaves the DNA backbone by beta-delta elimination to generate a single-strand break at the site of the removed base with both 3'- and 5'-phosphates. The chain is Formamidopyrimidine-DNA glycosylase from Methylobacterium radiotolerans (strain ATCC 27329 / DSM 1819 / JCM 2831 / NBRC 15690 / NCIMB 10815 / 0-1).